We begin with the raw amino-acid sequence, 238 residues long: uncharacterized protein (238 aa).

Residues 219–238 (EESINNNVDDTDDIDNDNFI) are disordered. Residues 227–238 (DDTDDIDNDNFI) show a composition bias toward acidic residues.

This is an uncharacterized protein from Buchnera aphidicola subsp. Acyrthosiphon pisum (strain APS) (Acyrthosiphon pisum symbiotic bacterium).